The chain runs to 423 residues: Glutamate-1-semialdehyde 2,1-aminomutase (423 aa).

K259 carries the post-translational modification N6-(pyridoxal phosphate)lysine.

The protein belongs to the class-III pyridoxal-phosphate-dependent aminotransferase family. HemL subfamily. Pyridoxal 5'-phosphate is required as a cofactor.

Its subcellular location is the cytoplasm. The catalysed reaction is (S)-4-amino-5-oxopentanoate = 5-aminolevulinate. It participates in porphyrin-containing compound metabolism; protoporphyrin-IX biosynthesis; 5-aminolevulinate from L-glutamyl-tRNA(Glu): step 2/2. The chain is Glutamate-1-semialdehyde 2,1-aminomutase from Methanobrevibacter smithii (strain ATCC 35061 / DSM 861 / OCM 144 / PS).